A 102-amino-acid chain; its full sequence is Small ribosomal subunit protein uS10 (102 aa).

Belongs to the universal ribosomal protein uS10 family. As to quaternary structure, part of the 30S ribosomal subunit.

Involved in the binding of tRNA to the ribosomes. The sequence is that of Small ribosomal subunit protein uS10 from Streptococcus uberis (strain ATCC BAA-854 / 0140J).